The following is a 412-amino-acid chain: Argininosuccinate synthase (412 aa).

10 to 18 (AYSGGLDTS) is a binding site for ATP. Tyrosine 89 contributes to the L-citrulline binding site. ATP is bound at residue glycine 119. The L-aspartate site is built by threonine 121, asparagine 125, and aspartate 126. Asparagine 125 contributes to the L-citrulline binding site. Arginine 129, serine 177, glutamate 261, and tyrosine 273 together coordinate L-citrulline.

It belongs to the argininosuccinate synthase family. Type 1 subfamily. Homotetramer.

It is found in the cytoplasm. It carries out the reaction L-citrulline + L-aspartate + ATP = 2-(N(omega)-L-arginino)succinate + AMP + diphosphate + H(+). It participates in amino-acid biosynthesis; L-arginine biosynthesis; L-arginine from L-ornithine and carbamoyl phosphate: step 2/3. In Bifidobacterium longum (strain NCC 2705), this protein is Argininosuccinate synthase.